We begin with the raw amino-acid sequence, 221 residues long: Cutinase 3 (221 aa).

Positions 1–17 (MRFHTILLAALASLVIA) are cleaved as a signal peptide. 2 disulfide bridges follow: cysteine 44–cysteine 122 and cysteine 70–cysteine 84. Residue serine 133 is the Nucleophile of the active site. The cysteines at positions 184 and 191 are disulfide-linked. Aspartate 188 is a catalytic residue. Histidine 201 acts as the Proton donor/acceptor in catalysis.

The protein belongs to the cutinase family.

The protein localises to the secreted. The catalysed reaction is cutin + H2O = cutin monomers.. In terms of biological role, catalyzes the hydrolysis of complex carboxylic polyesters found in the cell wall of plants. Degrades cutin, a macromolecule that forms the structure of the plant cuticle. Also degrades suberin, a specialized macromolecule found in the cell wall of various plant tissues. The protein is Cutinase 3 of Emericella nidulans (strain FGSC A4 / ATCC 38163 / CBS 112.46 / NRRL 194 / M139) (Aspergillus nidulans).